The chain runs to 831 residues: Heat shock 70 kDa protein 14 (831 aa).

2 disordered regions span residues E503–V579 and T786–T831. Positions V509 to S526 are enriched in basic and acidic residues. S533 bears the Phosphoserine mark.

Belongs to the heat shock protein 70 (TC 1.A.33) family. HSP110/SSE subfamily. Interacts with HTT1 in both cytoplasm and nucleus. In terms of tissue distribution, constitutively expressed.

The protein resides in the cytoplasm. The protein localises to the nucleus. Functionally, in cooperation with other chaperones, Hsp70s are key components that facilitate folding of de novo synthesized proteins, assist translocation of precursor proteins into organelles, and are responsible for degradation of damaged protein under stress conditions. The sequence is that of Heat shock 70 kDa protein 14 (HSP70-14) from Arabidopsis thaliana (Mouse-ear cress).